Here is a 434-residue protein sequence, read N- to C-terminus: Eukaryotic translation initiation factor 3 subunit E (434 aa).

The PCI domain maps to 219–392 (FFNHPKGRDL…GHVVMGTQPL (174 aa)).

This sequence belongs to the eIF-3 subunit E family. Component of the eukaryotic translation initiation factor 3 (eIF-3) complex. The eIF-3 complex interacts with pix. Interacts with mxt.

The protein localises to the cytoplasm. Component of the eukaryotic translation initiation factor 3 (eIF-3) complex, which is involved in protein synthesis of a specialized repertoire of mRNAs and, together with other initiation factors, stimulates binding of mRNA and methionyl-tRNAi to the 40S ribosome. The eIF-3 complex specifically targets and initiates translation of a subset of mRNAs involved in cell proliferation. This chain is Eukaryotic translation initiation factor 3 subunit E (eIF3-S6), found in Drosophila ananassae (Fruit fly).